Reading from the N-terminus, the 842-residue chain is Elongation factor 2 (842 aa).

The tr-type G domain maps to 17–346 (TNVRNMSVIA…MIVLHLPSPV (330 aa)). GTP-binding positions include 26 to 33 (AHVDHGKS), 158 to 161 (NKVD), and 213 to 215 (SGL). An N6,N6,N6-trimethyllysine; by EFM3; alternate modification is found at lysine 509. Lysine 509 bears the N6,N6-dimethyllysine; by EFM3; alternate mark. An N6-methyllysine; by EFM3; alternate modification is found at lysine 509. Serine 579 bears the Phosphoserine mark. N6,N6-dimethyllysine; by EFM2; alternate is present on lysine 613. Lysine 613 carries the N6-methyllysine; by EFM2; alternate modification. Histidine 699 carries the diphthamide modification. Threonine 713 and threonine 763 each carry phosphothreonine. Residue lysine 841 forms a Glycyl lysine isopeptide (Lys-Gly) (interchain with G-Cter in ubiquitin) linkage.

This sequence belongs to the TRAFAC class translation factor GTPase superfamily. Classic translation factor GTPase family. EF-G/EF-2 subfamily. As to quaternary structure, binds to 80S ribosomes. Actively translating ribosomes show mutually exclusive binding of eIF5a (HYP2 or ANB1) and EFT1/eEF2. Interacts with the 40S ribosomal subunit protein RPL9A; the interaction is direct. Interacts with the 60S ribosomal subunit proteins RPL12A; the interaction is direct. Interacts with RPS23A; the interaction is direct. Interacts with 18S rRNA; the interaction is direct. Interacts with 25S rRNA; the interaction is direct. Interacts with RPL0. Interacts with STM1; promoting ribosome inactivation. (Microbial infection) Diphthamide can be ADP-ribosylated by diphtheria toxin and by Pseudomonas exotoxin A, thus abolishing its function.

It localises to the cytoplasm. The catalysed reaction is GTP + H2O = GDP + phosphate + H(+). The protein operates within protein biosynthesis; polypeptide chain elongation. With respect to regulation, inhibited by fusidic acid and sordarin, which prevent the release of eEF2 from the ribosome after the translocation step. While fusidic acid acts on all eukaryotic eEF2, sordarin specifically binds and inhibits only selected fungal eEF2. Its function is as follows. Catalyzes the GTP-dependent ribosomal translocation step during translation elongation. During this step, the ribosome changes from the pre-translocational (PRE) to the post-translocational (POST) state as the newly formed A-site-bound peptidyl-tRNA and P-site-bound deacylated tRNA move to the P and E sites, respectively. Catalyzes the coordinated movement of the two tRNA molecules, the mRNA and conformational changes in the ribosome. The chain is Elongation factor 2 (EFT1) from Saccharomyces cerevisiae (strain ATCC 204508 / S288c) (Baker's yeast).